A 396-amino-acid chain; its full sequence is Tryptophan synthase beta chain (396 aa).

Lys-86 is modified (N6-(pyridoxal phosphate)lysine).

Belongs to the TrpB family. As to quaternary structure, tetramer of two alpha and two beta chains. Requires pyridoxal 5'-phosphate as cofactor.

It carries out the reaction (1S,2R)-1-C-(indol-3-yl)glycerol 3-phosphate + L-serine = D-glyceraldehyde 3-phosphate + L-tryptophan + H2O. Its pathway is amino-acid biosynthesis; L-tryptophan biosynthesis; L-tryptophan from chorismate: step 5/5. Functionally, the beta subunit is responsible for the synthesis of L-tryptophan from indole and L-serine. This chain is Tryptophan synthase beta chain, found in Vibrio vulnificus (strain CMCP6).